We begin with the raw amino-acid sequence, 530 residues long: PC4 and SFRS1-interacting protein (530 aa).

One can recognise a PWWP domain in the interval 1–64 (MTRDFKPGDL…PKDIFPYSEN (64 aa)). Residue lysine 75 forms a Glycyl lysine isopeptide (Lys-Gly) (interchain with G-Cter in SUMO2) linkage. The tract at residues 86-349 (NNPKVKFSSQ…VEKKRETSMD (264 aa)) is disordered. The segment covering 92–104 (FSSQQASTKQSNA) has biased composition (polar residues). Residues serine 102, serine 105, and serine 106 each carry the phosphoserine modification. Residues 113–135 (KETSVSKEDTDHEEKASNEDVTK) are compositionally biased toward basic and acidic residues. Phosphothreonine is present on residues threonine 115 and threonine 122. The residue at position 129 (serine 129) is a Phosphoserine. Threonine 141 carries the post-translational modification Phosphothreonine. Over residues 144–153 (AARRGRKRKA) the composition is skewed to basic residues. Residues 146-156 (RRGRKRKAEKQ) carry the Nuclear localization signal motif. Threonine 167 is subject to Phosphothreonine. Phosphoserine is present on residues serine 177 and serine 206. Positions 213-261 (EEDKSKKKGQEEKQPKKQLKKDEEGQKEEDKPRKEPDKKEGKKEVESKR) are enriched in basic and acidic residues. Serine 271 bears the Phosphoserine mark. Threonine 272 carries the phosphothreonine modification. A phosphoserine mark is found at serine 273 and serine 275. Residues 274–283 (DSEEEGDDQE) show a composition bias toward acidic residues. Over residues 287–302 (KRKGGRNFQTAHRRNM) the composition is skewed to basic residues. Residues 305–349 (GQHEKEAADRKRKQEEQMETEQQNKDEGKKPEVKKVEKKRETSMD) show a composition bias toward basic and acidic residues. Coiled coils occupy residues 306–334 (QHEKEAADRKRKQEEQMETEQQNKDEGKK) and 371–395 (NRCIEALDELASLQVTMQQAQKHTE). Residues 340-417 (VEKKRETSMD…VSQIIMEKST (78 aa)) form an integrase-binding domain (IBD) region. Position 434 is a phosphoserine (serine 434). A Phosphothreonine modification is found at threonine 437. Serine 443 carries the post-translational modification Phosphoserine. Basic and acidic residues predominate over residues 446–473 (EQRQHEEANKTKDQGKKGPNKKLDKEQT). The disordered stretch occupies residues 446–530 (EQRQHEEANK…ISLKDSTLDN (85 aa)). The segment covering 474 to 494 (GSKTLNGGSDAPDSNQAQHNG) has biased composition (polar residues). The segment covering 498–530 (EESKDKHEASSKKKPSNEERETEISLKDSTLDN) has biased composition (basic and acidic residues). Arginine 517 bears the Citrulline mark. Serine 522 bears the Phosphoserine mark. The residue at position 527 (threonine 527) is a Phosphothreonine.

The protein belongs to the HDGF family. In terms of assembly, monomer. Interacts with IFRD1/PC4. Interacts (via IBD domain) with POGZ (via IBM motif) and CDCA7L (via IBM motifs). Interacts (via IBD domain) with KMT2A (via IBM motifs) with a moderate affinity whereas interacts with the KMT2A-MEN1 complex with a greater affinity; MEN1 enhances interaction of KMT2A with PSIP1. Interacts (via IBD domain) with IWS1 (via IBM motif), MED1 (via IBM motif) and DBF4 (via IBM motifs). As to quaternary structure, (Microbial infection) Interacts (via IBD domain) with feline immunodeficiency virus (FIV) integrase (IN), determining its nuclear localization, its tight association with chromatin and its protection from the proteasome. Citrullinated by PADI4.

The protein resides in the nucleus. In terms of biological role, transcriptional coactivator involved in neuroepithelial stem cell differentiation and neurogenesis. Involved in particular in lens epithelial cell gene regulation and stress responses. May play an important role in lens epithelial to fiber cell terminal differentiation. May play a protective role during stress-induced apoptosis. The chain is PC4 and SFRS1-interacting protein (PSIP1) from Felis catus (Cat).